The following is a 227-amino-acid chain: tRNA (guanine-N(1)-)-methyltransferase (227 aa).

Residues Gly107 and 127-132 contribute to the S-adenosyl-L-methionine site; that span reads LGDFIL.

The protein belongs to the RNA methyltransferase TrmD family. In terms of assembly, homodimer.

It localises to the cytoplasm. It catalyses the reaction guanosine(37) in tRNA + S-adenosyl-L-methionine = N(1)-methylguanosine(37) in tRNA + S-adenosyl-L-homocysteine + H(+). Functionally, specifically methylates guanosine-37 in various tRNAs. In Mesomycoplasma hyopneumoniae (strain 232) (Mycoplasma hyopneumoniae), this protein is tRNA (guanine-N(1)-)-methyltransferase.